Reading from the N-terminus, the 185-residue chain is Pyridoxal 5'-phosphate synthase subunit PdxT (185 aa).

46–48 is a binding site for L-glutamine; that stretch reads GES. C78 (nucleophile) is an active-site residue. L-glutamine is bound by residues R106 and 132 to 133; that span reads IR. Active-site charge relay system residues include H168 and E170.

Belongs to the glutaminase PdxT/SNO family. In terms of assembly, in the presence of PdxS, forms a dodecamer of heterodimers. Only shows activity in the heterodimer.

The enzyme catalyses aldehydo-D-ribose 5-phosphate + D-glyceraldehyde 3-phosphate + L-glutamine = pyridoxal 5'-phosphate + L-glutamate + phosphate + 3 H2O + H(+). The catalysed reaction is L-glutamine + H2O = L-glutamate + NH4(+). The protein operates within cofactor biosynthesis; pyridoxal 5'-phosphate biosynthesis. Functionally, catalyzes the hydrolysis of glutamine to glutamate and ammonia as part of the biosynthesis of pyridoxal 5'-phosphate. The resulting ammonia molecule is channeled to the active site of PdxS. This Corynebacterium diphtheriae (strain ATCC 700971 / NCTC 13129 / Biotype gravis) protein is Pyridoxal 5'-phosphate synthase subunit PdxT.